The sequence spans 590 residues: Transcription factor GTE7 (590 aa).

The segment at 125-160 (LNNFTGEKNDLGPKKKKQKKNVSGLKRSNQFGPSDP) is disordered. In terms of domain architecture, Bromo spans 164–270 (KLLAGMLNTC…DHFDGMFNPA (107 aa)). Disordered stretches follow at residues 282 to 400 (TGSS…KDPN) and 476 to 590 (RQGF…EAQC). The segment covering 288-298 (PEPDFKPDFKQ) has biased composition (basic and acidic residues). Residues 347-369 (PSPPPPPPVIQPELPQPQPPPPQ) show a composition bias toward pro residues. The NET domain occupies 394 to 475 (PKAKDPNKRL…NYKKMASKIK (82 aa)). Basic and acidic residues predominate over residues 498–508 (SAEKRTRRGDA). Residues 509–521 (GEEDVDIGEDIPI) are compositionally biased toward acidic residues. A compositionally biased stretch (low complexity) spans 537–562 (AAAASSGSSSSGSSSSSGGSSSSSDS).

Its subcellular location is the nucleus. This is Transcription factor GTE7 (GTE7) from Arabidopsis thaliana (Mouse-ear cress).